The sequence spans 233 residues: uncharacterized protein (233 aa).

This is an uncharacterized protein from Methanocaldococcus jannaschii (strain ATCC 43067 / DSM 2661 / JAL-1 / JCM 10045 / NBRC 100440) (Methanococcus jannaschii).